A 301-amino-acid chain; its full sequence is Heterogeneous nuclear ribonucleoprotein D-like (301 aa).

RRM domains follow at residues 29 to 111 (GKMF…KGKE) and 114 to 193 (KKVF…QPKE). Residue Lys42 is modified to N6-methyllysine. Residue Lys90 forms a Glycyl lysine isopeptide (Lys-Gly) (interchain with G-Cter in SUMO2) linkage. N6-acetyllysine is present on Lys97. Phosphoserine is present on Ser122. Disordered regions lie at residues 194–229 (VYRQQQQQQKGGRGAAAGGRGGARGRGRGQGQNWNQ) and 279–301 (GQQSTYGKASRGGGNHQNNYQPY). The segment covering 204–223 (GGRGAAAGGRGGARGRGRGQ) has biased composition (gly residues). The segment at 223–301 (QGQNWNQGFN…GNHQNNYQPY (79 aa)) is necessary for interaction with TNPO1. Dimethylated arginine; alternate is present on Arg289. At Arg289 the chain carries Omega-N-methylarginine; alternate.

As to quaternary structure, interacts with TNPO1. Interacts with ZNF148. Dimethylation of Arg-289 is probably of the asymmetric type. In terms of tissue distribution, expressed in skeletal muscle, myoblast, myotube, heart, brain, liver, kidney, heart, lung, stomach, small intestine, large intestine, spleen, and testis (at protein level). Expressed in brain, skeletal muscle, heart, lung, liver, stomach, small intestine, large intestine, kidney, spleen and testis.

It localises to the nucleus. The protein localises to the cytoplasm. Functionally, acts as a transcriptional regulator. Promotes transcription repression. Promotes transcription activation in differentiated myotubes. Binds to double- and single-stranded DNA sequences. Binds to the transcription suppressor CATR sequence of the COX5B promoter. Binds with high affinity to RNA molecules that contain AU-rich elements (AREs) found within the 3'-UTR of many proto-oncogenes and cytokine mRNAs. Binds both to nuclear and cytoplasmic poly(A) mRNAs. Binds to poly(G) and poly(A), but not to poly(U) or poly(C) RNA homopolymers. Binds to the 5'-ACUAGC-3' RNA consensus sequence. This chain is Heterogeneous nuclear ribonucleoprotein D-like (Hnrnpdl), found in Mus musculus (Mouse).